The primary structure comprises 190 residues: Pyridoxal 5'-phosphate synthase subunit PdxT (190 aa).

An L-glutamine-binding site is contributed by 46-48; it reads GES. Cys-78 acts as the Nucleophile in catalysis. L-glutamine contacts are provided by residues Arg-105 and 133–134; that span reads IR. Active-site charge relay system residues include His-169 and Glu-171.

The protein belongs to the glutaminase PdxT/SNO family. In terms of assembly, in the presence of PdxS, forms a dodecamer of heterodimers. Only shows activity in the heterodimer.

It catalyses the reaction aldehydo-D-ribose 5-phosphate + D-glyceraldehyde 3-phosphate + L-glutamine = pyridoxal 5'-phosphate + L-glutamate + phosphate + 3 H2O + H(+). The enzyme catalyses L-glutamine + H2O = L-glutamate + NH4(+). Its pathway is cofactor biosynthesis; pyridoxal 5'-phosphate biosynthesis. Its function is as follows. Catalyzes the hydrolysis of glutamine to glutamate and ammonia as part of the biosynthesis of pyridoxal 5'-phosphate. The resulting ammonia molecule is channeled to the active site of PdxS. The protein is Pyridoxal 5'-phosphate synthase subunit PdxT of Niallia circulans (Bacillus circulans).